The following is a 494-amino-acid chain: Probable cytochrome P450 313a4 (494 aa).

Cys-440 is a binding site for heme.

It belongs to the cytochrome P450 family. It depends on heme as a cofactor.

It localises to the endoplasmic reticulum membrane. The protein localises to the microsome membrane. May be involved in the metabolism of insect hormones and in the breakdown of synthetic insecticides. The polypeptide is Probable cytochrome P450 313a4 (Cyp313a4) (Drosophila melanogaster (Fruit fly)).